The following is a 166-amino-acid chain: Small ribosomal subunit protein uS3m (166 aa).

The N-terminal 25 residues, 1–25 (MLRSLQHVESHINQCRRISTTSTLL), are a transit peptide targeting the mitochondrion.

Belongs to the universal ribosomal protein uS3 family. Component of the mitochondrial ribosome small subunit (28S) which comprises a 12S rRNA and about 30 distinct proteins.

The protein resides in the mitochondrion. The chain is Small ribosomal subunit protein uS3m (mrps-24) from Caenorhabditis briggsae.